A 542-amino-acid chain; its full sequence is Protein DETOXIFICATION 34 (542 aa).

The next 12 membrane-spanning stretches (helical) occupy residues 97-117, 127-147, 176-196, 204-224, 240-260, 272-292, 316-336, 344-364, 390-410, 435-455, 462-482, and 491-511; these read APIA…SIFV, AVAI…LGMA, ILLG…PLLI, IAEI…ALAI, IMAW…YLFI, AAFD…VVGW, FASA…IVLT, IAVG…MLFI, VIVT…VILI, LLGI…VAVG, VAYI…FLLG, and GIWI…LYMI.

It belongs to the multi antimicrobial extrusion (MATE) (TC 2.A.66.1) family.

It is found in the membrane. This is Protein DETOXIFICATION 34 from Arabidopsis thaliana (Mouse-ear cress).